The chain runs to 193 residues: dTTP/UTP pyrophosphatase (193 aa).

The Proton acceptor role is filled by D75.

It belongs to the Maf family. YhdE subfamily. A divalent metal cation serves as cofactor.

It is found in the cytoplasm. It carries out the reaction dTTP + H2O = dTMP + diphosphate + H(+). The enzyme catalyses UTP + H2O = UMP + diphosphate + H(+). In terms of biological role, nucleoside triphosphate pyrophosphatase that hydrolyzes dTTP and UTP. May have a dual role in cell division arrest and in preventing the incorporation of modified nucleotides into cellular nucleic acids. This chain is dTTP/UTP pyrophosphatase, found in Chlorobium luteolum (strain DSM 273 / BCRC 81028 / 2530) (Pelodictyon luteolum).